The sequence spans 1413 residues: ABC transporter G family member 33 (1413 aa).

Low complexity predominate over residues 1-10; it reads MGSSFRSSSS. The disordered stretch occupies residues 1–21; sequence MGSSFRSSSSRNEHEDGGDEA. Over residues 11 to 21 the composition is skewed to basic and acidic residues; sequence RNEHEDGGDEA. Positions 140–412 constitute an ABC transporter 1 domain; the sequence is LKLSGVRTNE…FEECGFQCPE (273 aa). Residue 172–179 participates in ATP binding; it reads GPPGCGKT. Residues 490-702 form the ABC transmembrane type-2 1 domain; the sequence is ELFRACISRE…AEIGLSVNEF (213 aa). Helical transmembrane passes span 509-529, 546-566, 580-600, 626-646, 652-672, and 738-758; these read VYLFKTFQLVLAAIITMTVFI, CLFFATVVLLVDGIPELSMTV, FYPAWAYAIPATVLKIPLSFF, FMILFAVHFTSISMFRCIAAI, AAMTAGSFVMLITFVFAGFAI, and LSALLGLTIIFNTIFTLALSF. The 253-residue stretch at 813 to 1065 folds into the ABC transporter 2 domain; that stretch reads ITFQDLNYYV…CVIEYFQNIP (253 aa). ATP is bound at residue 858-865; it reads GISGAGKT. Residues 1138–1352 enclose the ABC transmembrane type-2 2 domain; the sequence is EQFKSCLWKM…TLNLFFSSQY (215 aa). 7 consecutive transmembrane segments (helical) span residues 1157-1177, 1189-1209, 1245-1265, 1276-1296, 1302-1322, 1330-1350, and 1385-1405; these read YNLMRIGHTFISSFIFGLLFW, LFTVLGAIYGLVLFVGINNCT, IPYIFIQSAEFVIVIYPMIGF, LYAMFCNLLCFNYLAMFLISI, VAAILQSLFFTTFNIFAGFLI, WWVWFYYITPTSWTLNLFFSS, and ITAIILIAFPIALATMYAFFV.

It belongs to the ABC transporter superfamily. ABCG family. PDR (TC 3.A.1.205) subfamily. As to expression, expressed in roots and stems.

The protein localises to the membrane. Functionally, may be a general defense protein. The protein is ABC transporter G family member 33 (ABCG33) of Arabidopsis thaliana (Mouse-ear cress).